Here is a 469-residue protein sequence, read N- to C-terminus: uncharacterized protein (469 aa).

A run of 3 helical transmembrane segments spans residues 42 to 62 (DVII…AYVI), 179 to 199 (IVLP…VTPS), and 249 to 269 (NLKY…GLFV).

Its subcellular location is the cell membrane. This is an uncharacterized protein from Methanocaldococcus jannaschii (strain ATCC 43067 / DSM 2661 / JAL-1 / JCM 10045 / NBRC 100440) (Methanococcus jannaschii).